The following is a 378-amino-acid chain: Queuine tRNA-ribosyltransferase (378 aa).

Asp-90 acts as the Proton acceptor in catalysis. Substrate contacts are provided by residues 90-94 (DSGGF), Asp-144, Gln-188, and Gly-220. The RNA binding stretch occupies residues 251-257 (GVGTPED). Asp-270 functions as the Nucleophile in the catalytic mechanism. The RNA binding; important for wobble base 34 recognition stretch occupies residues 275 to 279 (TRNAR). The Zn(2+) site is built by Cys-308, Cys-310, Cys-313, and His-339.

This sequence belongs to the queuine tRNA-ribosyltransferase family. Homodimer. Within each dimer, one monomer is responsible for RNA recognition and catalysis, while the other monomer binds to the replacement base PreQ1. Zn(2+) serves as cofactor.

The enzyme catalyses 7-aminomethyl-7-carbaguanine + guanosine(34) in tRNA = 7-aminomethyl-7-carbaguanosine(34) in tRNA + guanine. It functions in the pathway tRNA modification; tRNA-queuosine biosynthesis. Catalyzes the base-exchange of a guanine (G) residue with the queuine precursor 7-aminomethyl-7-deazaguanine (PreQ1) at position 34 (anticodon wobble position) in tRNAs with GU(N) anticodons (tRNA-Asp, -Asn, -His and -Tyr). Catalysis occurs through a double-displacement mechanism. The nucleophile active site attacks the C1' of nucleotide 34 to detach the guanine base from the RNA, forming a covalent enzyme-RNA intermediate. The proton acceptor active site deprotonates the incoming PreQ1, allowing a nucleophilic attack on the C1' of the ribose to form the product. After dissociation, two additional enzymatic reactions on the tRNA convert PreQ1 to queuine (Q), resulting in the hypermodified nucleoside queuosine (7-(((4,5-cis-dihydroxy-2-cyclopenten-1-yl)amino)methyl)-7-deazaguanosine). The protein is Queuine tRNA-ribosyltransferase of Nautilia profundicola (strain ATCC BAA-1463 / DSM 18972 / AmH).